We begin with the raw amino-acid sequence, 96 residues long: Small ribosomal subunit protein bS18 (96 aa).

Basic and acidic residues predominate over residues 1 to 22; the sequence is MYKDVDSHQRDSRSDGHQDGFK. The segment at 1–25 is disordered; sequence MYKDVDSHQRDSRSDGHQDGFKKNP.

Belongs to the bacterial ribosomal protein bS18 family. Part of the 30S ribosomal subunit. Forms a tight heterodimer with protein bS6.

In terms of biological role, binds as a heterodimer with protein bS6 to the central domain of the 16S rRNA, where it helps stabilize the platform of the 30S subunit. This chain is Small ribosomal subunit protein bS18, found in Borrelia hermsii (strain HS1 / DAH).